The following is a 121-amino-acid chain: Large ribosomal subunit protein uL24 (121 aa).

The tract at residues 1–23 (MVRIESSQPRKQRKARYDAPSHM) is disordered.

This sequence belongs to the universal ribosomal protein uL24 family. As to quaternary structure, part of the 50S ribosomal subunit.

Its function is as follows. One of two assembly initiator proteins, it binds directly to the 5'-end of the 23S rRNA, where it nucleates assembly of the 50S subunit. Located at the polypeptide exit tunnel on the outside of the subunit. The protein is Large ribosomal subunit protein uL24 of Methanoregula boonei (strain DSM 21154 / JCM 14090 / 6A8).